Consider the following 344-residue polypeptide: Fructose-1,6-bisphosphatase class 1 (344 aa).

Glutamate 90, aspartate 109, leucine 111, and aspartate 112 together coordinate Mg(2+). Substrate contacts are provided by residues aspartate 112–serine 115 and asparagine 200. A Mg(2+)-binding site is contributed by glutamate 271.

Belongs to the FBPase class 1 family. In terms of assembly, homotetramer. Mg(2+) is required as a cofactor.

Its subcellular location is the cytoplasm. It catalyses the reaction beta-D-fructose 1,6-bisphosphate + H2O = beta-D-fructose 6-phosphate + phosphate. It participates in carbohydrate biosynthesis; gluconeogenesis. This is Fructose-1,6-bisphosphatase class 1 from Nitrobacter vulgaris.